We begin with the raw amino-acid sequence, 545 residues long: MAAKEVVFGNDARVKMLAGVNILANAVKVTLGPKGRNVVLDKSFGSPLITKDGVSVAKEIELEDKFENMGAQMVKEVASKANDAAGDGTTTATVLAQAIVTEGLKAVAAGMNPMDLKRGIDKAVIAAVAELKALSQPCADSKAIAQVATISANSDESIGEIIATAMEKVGKEGVITVEEGQALENELDVVEGMQFDRGYLSPYFINKPETGSVELDHPFVLLVDKKISNIRELLPILEGLAKTGKPLLIVAEDVEGEALATLVVNNMRGIVKVAAVKAPGFGDRRKAMLQDVAILTGGTVIAEEIGLELEKATLEDLGTAKRVVITKDNTTIIDGNGEQAQIEARVSQIKQQIEESTSDYDKEKLQERMAKLAGGVAVIKVGAATEVEMKEKKARVEDALHATRAAVEEGVVPGGGVALVRVASKIAELEVLNEDQKHGVVIALRAMEAPLRQIATNAGEEASVVANTVKNGSGNYGYNAGNDTYGDMLEMGILDPTKVTRCALQFAASIAGLMITTEAMVAEIPQNSAPDMGGMGGMGGMGGMM.

ATP contacts are provided by residues 30-33 (TLGP), lysine 51, 87-91 (DGTTT), glycine 415, and aspartate 495.

Belongs to the chaperonin (HSP60) family. As to quaternary structure, forms a cylinder of 14 subunits composed of two heptameric rings stacked back-to-back. Interacts with the co-chaperonin GroES.

The protein resides in the cytoplasm. It carries out the reaction ATP + H2O + a folded polypeptide = ADP + phosphate + an unfolded polypeptide.. Its function is as follows. Together with its co-chaperonin GroES, plays an essential role in assisting protein folding. The GroEL-GroES system forms a nano-cage that allows encapsulation of the non-native substrate proteins and provides a physical environment optimized to promote and accelerate protein folding. The protein is Chaperonin GroEL of Shewanella sp. (strain W3-18-1).